Consider the following 224-residue polypeptide: Elongation factor Ts (224 aa).

The tract at residues 81–84 is involved in Mg(2+) ion dislocation from EF-Tu; sequence TDFV.

It belongs to the EF-Ts family.

It is found in the cytoplasm. Functionally, associates with the EF-Tu.GDP complex and induces the exchange of GDP to GTP. It remains bound to the aminoacyl-tRNA.EF-Tu.GTP complex up to the GTP hydrolysis stage on the ribosome. The protein is Elongation factor Ts of Finegoldia magna (strain ATCC 29328 / DSM 20472 / WAL 2508) (Peptostreptococcus magnus).